A 138-amino-acid chain; its full sequence is Cysteine desulfuration protein SufE (138 aa).

C51 functions as the Cysteine persulfide intermediate in the catalytic mechanism.

Belongs to the SufE family. Homodimer. Interacts with SufS.

The protein localises to the cytoplasm. Its pathway is cofactor biosynthesis; iron-sulfur cluster biosynthesis. Its function is as follows. Participates in cysteine desulfuration mediated by SufS. Cysteine desulfuration mobilizes sulfur from L-cysteine to yield L-alanine and constitutes an essential step in sulfur metabolism for biosynthesis of a variety of sulfur-containing biomolecules. Functions as a sulfur acceptor for SufS, by mediating the direct transfer of the sulfur atom from the S-sulfanylcysteine of SufS, an intermediate product of cysteine desulfuration process. This is Cysteine desulfuration protein SufE from Escherichia coli O6:K15:H31 (strain 536 / UPEC).